The following is a 36-amino-acid chain: Zinc metalloproteinase-disintegrin-like VaH1 (36 aa).

The Peptidase M12B domain maps to Met-1–Asn-36.

It belongs to the venom metalloproteinase (M12B) family. P-III subfamily. P-IIIa sub-subfamily. In terms of assembly, monomer. Zn(2+) is required as a cofactor. In terms of processing, the N-terminus is blocked. Post-translationally, glycosylated. In terms of tissue distribution, expressed by the venom gland.

The protein resides in the secreted. Its activity is regulated as follows. Inhibited by EDTA, but not inhibited by iodoacetamide, PMSF and pepstatin A. Its function is as follows. Snake venom zinc metalloprotease that exhibits strong hemorrhagic activity. It also degrades alpha-chain of fibrinogen (FGA), but not the beta- and the gamma-chains. Possesses potent azocaseinolytic activity and cleaves insulin B-chain, hydrolyzing it at positions Ala(14)-Leu(15), followed by Tyr(16)-Leu(17) and His(10)-Leu(11). In vivo, subcutaneous injection into mice induces strong hemorrhage. This is Zinc metalloproteinase-disintegrin-like VaH1 from Vipera ammodytes ammodytes (Western sand viper).